We begin with the raw amino-acid sequence, 218 residues long: Guanylate kinase (218 aa).

The Guanylate kinase-like domain occupies 17-196; the sequence is GVLLALSSPS…ALEKLNEILH (180 aa). Position 24-31 (24-31) interacts with ATP; sequence SPSGAGKT.

This sequence belongs to the guanylate kinase family.

It is found in the cytoplasm. It carries out the reaction GMP + ATP = GDP + ADP. Functionally, essential for recycling GMP and indirectly, cGMP. The chain is Guanylate kinase from Maricaulis maris (strain MCS10) (Caulobacter maris).